We begin with the raw amino-acid sequence, 150 residues long: Small heat shock protein IbpB (150 aa).

Residues 26–137 (SQEPIDFPPY…QPQRIAIGGG (112 aa)) form the sHSP domain.

This sequence belongs to the small heat shock protein (HSP20) family. As to quaternary structure, homodimer. Forms homomultimers of about 100-150 subunits at optimal growth temperatures. Conformation changes to oligomers at high temperatures or high ionic concentrations. The decrease in size of the multimers is accompanied by an increase in chaperone activity.

It is found in the cytoplasm. In terms of biological role, associates with aggregated proteins, together with IbpA, to stabilize and protect them from irreversible denaturation and extensive proteolysis during heat shock and oxidative stress. Aggregated proteins bound to the IbpAB complex are more efficiently refolded and reactivated by the ATP-dependent chaperone systems ClpB and DnaK/DnaJ/GrpE. Its activity is ATP-independent. The protein is Small heat shock protein IbpB of Pectobacterium atrosepticum (strain SCRI 1043 / ATCC BAA-672) (Erwinia carotovora subsp. atroseptica).